Reading from the N-terminus, the 185-residue chain is Sulfopyruvate decarboxylase subunit beta (185 aa).

This sequence belongs to the TPP enzyme family. Heterododecamer composed of 6 subunits alpha and 6 subunits beta. The cofactor is thiamine diphosphate.

It carries out the reaction 3-sulfopyruvate + H(+) = sulfoacetaldehyde + CO2. Its pathway is cofactor biosynthesis; coenzyme M biosynthesis; sulfoacetaldehyde from phosphoenolpyruvate and sulfite: step 4/4. Its function is as follows. Involved in the biosynthesis of the coenzyme M (2-mercaptoethanesulfonic acid). Catalyzes the decarboxylation of sulfopyruvate to sulfoacetaldehyde. The sequence is that of Sulfopyruvate decarboxylase subunit beta from Methanococcus maripaludis (strain DSM 14266 / JCM 13030 / NBRC 101832 / S2 / LL).